A 96-amino-acid chain; its full sequence is MSLRPLHDRVIVKRIESETTTASGIVIPDNAAEKPDQGVVLAVGPGKKNDKGELSVLSVKVGDRVLFGKYSGQTVKVNGDELLVMKEDDLFAVVEK.

The protein belongs to the GroES chaperonin family. Heptamer of 7 subunits arranged in a ring. Interacts with the chaperonin GroEL.

It is found in the cytoplasm. Functionally, together with the chaperonin GroEL, plays an essential role in assisting protein folding. The GroEL-GroES system forms a nano-cage that allows encapsulation of the non-native substrate proteins and provides a physical environment optimized to promote and accelerate protein folding. GroES binds to the apical surface of the GroEL ring, thereby capping the opening of the GroEL channel. The polypeptide is Co-chaperonin GroES (Paracidovorax citrulli (strain AAC00-1) (Acidovorax citrulli)).